The chain runs to 539 residues: Tyrosine-protein kinase csk-1 (539 aa).

The region spanning 43 to 110 (SPGNDVIVTR…HADCVVRING (68 aa)) is the SH3 domain. A disordered region spans residues 129–148 (PGAASTTSSTSSHHSTAANH). Over residues 131-146 (AASTTSSTSSHHSTAA) the composition is skewed to low complexity. Residues 151–241 (WFHSMISREN…GLCHRLVTPI (91 aa)) form the SH2 domain. Positions 283–535 (IDVGDTIGHG…GQVLQRLTTI (253 aa)) constitute a Protein kinase domain. Residues 289–297 (IGHGEFGDV) and lysine 310 each bind ATP. The Proton acceptor role is filled by aspartate 403.

This sequence belongs to the protein kinase superfamily. Tyr protein kinase family. CSK subfamily. Mg(2+) serves as cofactor. Requires Mn(2+) as cofactor. As to expression, expressed predominantly in pharyngeal muscles in procorpus, metacorpus and terminal bulb. Expressed also in some neurons (ASE, ADF, AVA, AUA, RMDV and BAG) in the head region, anchor cell, vulva, cells around anus, body wall muscle and gondal distal tip cells.

The enzyme catalyses L-tyrosyl-[protein] + ATP = O-phospho-L-tyrosyl-[protein] + ADP + H(+). Non-receptor tyrosine-protein kinase which plays a role in pharynx function by regulating pumping and the orientation of pharyngeal muscle fibers, independently of src-1 and src-2. May phosphorylate and thereby negatively regulate src-1 and src-2 activities. In Caenorhabditis elegans, this protein is Tyrosine-protein kinase csk-1.